We begin with the raw amino-acid sequence, 293 residues long: GTPase Era (293 aa).

Residues 2–168 enclose the Era-type G domain; sequence KILFSTIIGR…INEIKKYSYE (167 aa). Positions 10–17 are G1; the sequence is GRPNVGKS. Position 10–17 (10–17) interacts with GTP; that stretch reads GRPNVGKS. The G2 stretch occupies residues 36-40; sequence QATRD. Residues 57–60 form a G3 region; the sequence is DTPG. Residues 57–61 and 118–121 each bind GTP; these read DTPGI and TKID. Residues 118–121 are G4; the sequence is TKID. The segment at 147–149 is G5; the sequence is ISS. The KH type-2 domain maps to 199–279; that stretch reads LEQELPHSIL…KLFLKIKVKK (81 aa).

The protein belongs to the TRAFAC class TrmE-Era-EngA-EngB-Septin-like GTPase superfamily. Era GTPase family. Monomer.

It localises to the cytoplasm. The protein localises to the cell membrane. In terms of biological role, an essential GTPase that binds both GDP and GTP, with rapid nucleotide exchange. Plays a role in 16S rRNA processing and 30S ribosomal subunit biogenesis and possibly also in cell cycle regulation and energy metabolism. The chain is GTPase Era from Mycoplasmopsis pulmonis (strain UAB CTIP) (Mycoplasma pulmonis).